The following is a 580-amino-acid chain: Microcin-J25 export ATP-binding/permease protein McjD (580 aa).

A run of 6 helical transmembrane segments spans residues 25–45 (FFSM…SPLI), 66–86 (VLLA…VFLF), 143–163 (VSQN…VVLS), 167–187 (WFSA…NTRL), 261–281 (AVIL…NGVV), and 286–306 (FIMI…IGAL). In terms of domain architecture, ABC transmembrane type-1 spans 25–312 (FFSMLFITSL…IGALLSEIRQ (288 aa)). The 234-residue stretch at 345–578 (LSIRELSFSY…NEYISGLASV (234 aa)) folds into the ABC transporter domain. 378 to 385 (GPSGSGKS) provides a ligand contact to ATP.

Belongs to the ABC transporter superfamily. Homodimer.

It is found in the cell inner membrane. Functionally, is able to protect a cell, which harbors the plasmid pTUC100 encoding microcin J25, against microcin J25. Is required for microcin J25 export out of the producing cells. The protein is Microcin-J25 export ATP-binding/permease protein McjD (mcjD) of Escherichia coli.